The chain runs to 241 residues: Ashwin (241 aa).

3 disordered regions span residues 1–21 (MAAQ…SARS), 82–102 (KMME…SVTA), and 212–241 (KRSV…CTWP). Positions 11–21 (GGKEERVSARS) are enriched in basic and acidic residues.

Belongs to the ashwin family.

The protein resides in the nucleus. This chain is Ashwin, found in Gallus gallus (Chicken).